Here is a 1227-residue protein sequence, read N- to C-terminus: Methionine synthase (1227 aa).

In terms of domain architecture, Hcy-binding spans 2–325; it reads SSKVEQLRAQ…QHIAAMSRAV (324 aa). Zn(2+) is bound by residues Cys-247, Cys-310, and Cys-311. The Pterin-binding domain occupies 356-617; the sequence is FVNVGERTNV…LPAELRDAVE (262 aa). The 95-residue stretch at 650 to 744 folds into the B12-binding N-terminal domain; it reads QQAEWRSWEV…FIEASKEQGK (95 aa). Methylcob(III)alamin is bound by residues Glu-694, 756-760, His-759, Ser-804, Thr-808, and Ala-860; that span reads GDVHD. Positions 746–881 constitute a B12-binding domain; sequence NGKMVIATVK…SDTQRDDFVA (136 aa). Positions 897-1227 constitute an AdoMet activation domain; sequence KKPRTPPVTL…LAPNLGYDAD (331 aa). Residues Asp-946, Arg-1134, and 1189–1190 contribute to the S-adenosyl-L-methionine site; that span reads YY.

Belongs to the vitamin-B12 dependent methionine synthase family. It depends on methylcob(III)alamin as a cofactor. Zn(2+) is required as a cofactor.

It carries out the reaction (6S)-5-methyl-5,6,7,8-tetrahydrofolate + L-homocysteine = (6S)-5,6,7,8-tetrahydrofolate + L-methionine. It functions in the pathway amino-acid biosynthesis; L-methionine biosynthesis via de novo pathway; L-methionine from L-homocysteine (MetH route): step 1/1. Functionally, catalyzes the transfer of a methyl group from methyl-cobalamin to homocysteine, yielding enzyme-bound cob(I)alamin and methionine. Subsequently, remethylates the cofactor using methyltetrahydrofolate. The chain is Methionine synthase (metH) from Escherichia coli (strain K12).